A 516-amino-acid polypeptide reads, in one-letter code: 3-ketoacyl-CoA synthase 4 (516 aa).

The next 2 membrane-spanning stretches (helical) occupy residues 48 to 68 and 87 to 107; these read LISN…SVEA and LVSI…YVMT. In terms of domain architecture, FAE spans 104-393; the sequence is YVMTRPRPVY…FFMTLVVKKL (290 aa). Catalysis depends on residues Cys-248, His-327, His-411, His-415, His-444, and Asn-448.

This sequence belongs to the thiolase-like superfamily. Chalcone/stilbene synthases family. In terms of tissue distribution, expressed at low levels in siliques, flowers, leaves and stems.

It localises to the membrane. The catalysed reaction is a very-long-chain acyl-CoA + malonyl-CoA + H(+) = a very-long-chain 3-oxoacyl-CoA + CO2 + CoA. The protein operates within lipid metabolism; fatty acid biosynthesis. The polypeptide is 3-ketoacyl-CoA synthase 4 (Arabidopsis thaliana (Mouse-ear cress)).